The primary structure comprises 345 residues: Phosphoribosylformylglycinamidine cyclo-ligase (345 aa).

This sequence belongs to the AIR synthase family.

It localises to the cytoplasm. The enzyme catalyses 2-formamido-N(1)-(5-O-phospho-beta-D-ribosyl)acetamidine + ATP = 5-amino-1-(5-phospho-beta-D-ribosyl)imidazole + ADP + phosphate + H(+). Its pathway is purine metabolism; IMP biosynthesis via de novo pathway; 5-amino-1-(5-phospho-D-ribosyl)imidazole from N(2)-formyl-N(1)-(5-phospho-D-ribosyl)glycinamide: step 2/2. This Shewanella sp. (strain MR-7) protein is Phosphoribosylformylglycinamidine cyclo-ligase.